A 244-amino-acid chain; its full sequence is 7-cyano-7-deazaguanine synthase (244 aa).

Residue 17-27 (FSGGQDSTTCL) participates in ATP binding. The Zn(2+) site is built by Cys-205, Cys-220, Cys-223, and Cys-226.

Belongs to the QueC family. It depends on Zn(2+) as a cofactor.

The enzyme catalyses 7-carboxy-7-deazaguanine + NH4(+) + ATP = 7-cyano-7-deazaguanine + ADP + phosphate + H2O + H(+). Its pathway is purine metabolism; 7-cyano-7-deazaguanine biosynthesis. Catalyzes the ATP-dependent conversion of 7-carboxy-7-deazaguanine (CDG) to 7-cyano-7-deazaguanine (preQ(0)). The sequence is that of 7-cyano-7-deazaguanine synthase from Bordetella pertussis (strain Tohama I / ATCC BAA-589 / NCTC 13251).